The primary structure comprises 346 residues: tRNA N6-adenosine threonylcarbamoyltransferase (346 aa).

Positions 111 and 115 each coordinate Fe cation. Residues 134 to 138 (LVSGG), Asp167, Gly180, Asp184, and Asn279 contribute to the substrate site. Residue Asp307 coordinates Fe cation.

The protein belongs to the KAE1 / TsaD family. Fe(2+) is required as a cofactor.

The protein localises to the cytoplasm. The enzyme catalyses L-threonylcarbamoyladenylate + adenosine(37) in tRNA = N(6)-L-threonylcarbamoyladenosine(37) in tRNA + AMP + H(+). Functionally, required for the formation of a threonylcarbamoyl group on adenosine at position 37 (t(6)A37) in tRNAs that read codons beginning with adenine. Is involved in the transfer of the threonylcarbamoyl moiety of threonylcarbamoyl-AMP (TC-AMP) to the N6 group of A37, together with TsaE and TsaB. TsaD likely plays a direct catalytic role in this reaction. In Nostoc sp. (strain PCC 7120 / SAG 25.82 / UTEX 2576), this protein is tRNA N6-adenosine threonylcarbamoyltransferase.